Consider the following 878-residue polypeptide: Phosphoenolpyruvate carboxylase (878 aa).

Active-site residues include H138 and K545.

Belongs to the PEPCase type 1 family. The cofactor is Mg(2+).

It carries out the reaction oxaloacetate + phosphate = phosphoenolpyruvate + hydrogencarbonate. Its function is as follows. Forms oxaloacetate, a four-carbon dicarboxylic acid source for the tricarboxylic acid cycle. The sequence is that of Phosphoenolpyruvate carboxylase from Shewanella sediminis (strain HAW-EB3).